Reading from the N-terminus, the 149-residue chain is Large ribosomal subunit protein uL15 (149 aa).

Residues 1–53 (MRLHTLQPAPGAKSTRKRVGRGTSSGHGKTSGFGHKGQKARSGRVGKRGFEGG) form a disordered region. Residues 23-35 (TSSGHGKTSGFGH) are compositionally biased toward gly residues. The segment covering 36 to 47 (KGQKARSGRVGK) has biased composition (basic residues).

The protein belongs to the universal ribosomal protein uL15 family. As to quaternary structure, part of the 50S ribosomal subunit.

Its function is as follows. Binds to the 23S rRNA. In Coprothermobacter proteolyticus (strain ATCC 35245 / DSM 5265 / OCM 4 / BT), this protein is Large ribosomal subunit protein uL15.